The following is a 124-amino-acid chain: Small ribosomal subunit protein uS12 (124 aa).

Residues 1–42 (MPTTQQLIRKGRKTEEETSDAPALEGSPQRRGVCTRVYTTTP) are disordered. D89 bears the 3-methylthioaspartic acid mark. The interval 105-124 (AGVEERRQGRSKYGTKKPRE) is disordered. Basic residues predominate over residues 113–124 (GRSKYGTKKPRE).

It belongs to the universal ribosomal protein uS12 family. In terms of assembly, part of the 30S ribosomal subunit. Contacts proteins S8 and S17. May interact with IF1 in the 30S initiation complex.

In terms of biological role, with S4 and S5 plays an important role in translational accuracy. Functionally, interacts with and stabilizes bases of the 16S rRNA that are involved in tRNA selection in the A site and with the mRNA backbone. Located at the interface of the 30S and 50S subunits, it traverses the body of the 30S subunit contacting proteins on the other side and probably holding the rRNA structure together. The combined cluster of proteins S8, S12 and S17 appears to hold together the shoulder and platform of the 30S subunit. This Salinibacter ruber (strain DSM 13855 / M31) protein is Small ribosomal subunit protein uS12.